The primary structure comprises 282 residues: 4-diphosphocytidyl-2-C-methyl-D-erythritol kinase (282 aa).

Residue lysine 12 is part of the active site. Residue 95 to 105 participates in ATP binding; it reads PMGGGIGGGSS. Aspartate 137 is an active-site residue.

Belongs to the GHMP kinase family. IspE subfamily.

The enzyme catalyses 4-CDP-2-C-methyl-D-erythritol + ATP = 4-CDP-2-C-methyl-D-erythritol 2-phosphate + ADP + H(+). It participates in isoprenoid biosynthesis; isopentenyl diphosphate biosynthesis via DXP pathway; isopentenyl diphosphate from 1-deoxy-D-xylulose 5-phosphate: step 3/6. Functionally, catalyzes the phosphorylation of the position 2 hydroxy group of 4-diphosphocytidyl-2C-methyl-D-erythritol. This Pseudomonas aeruginosa (strain LESB58) protein is 4-diphosphocytidyl-2-C-methyl-D-erythritol kinase.